Reading from the N-terminus, the 212-residue chain is uncharacterized protein (212 aa).

Positions 53, 74, and 97 each coordinate S-adenosyl-L-methionine.

This sequence belongs to the methyltransferase superfamily. YrrT family.

In terms of biological role, could be a S-adenosyl-L-methionine-dependent methyltransferase. This is an uncharacterized protein from Bacillus mycoides (strain KBAB4) (Bacillus weihenstephanensis).